The chain runs to 511 residues: IWS1-like protein (511 aa).

The segment at 1–200 (MSDHEEESHG…DDGPVDRHGR (200 aa)) is disordered. 2 stretches are compositionally biased toward low complexity: residues 11 to 30 (ASPT…PISP) and 55 to 86 (APAS…SPVK). Residues 94–103 (DSDEDSDAEE) are compositionally biased toward acidic residues. A compositionally biased stretch (basic and acidic residues) spans 134-143 (HEGTSKKEPT). The segment covering 166–179 (LDEFVEGRDEEESQ) has biased composition (acidic residues). One can recognise a TFIIS N-terminal domain in the interval 294–374 (SALSEWLAPL…GEWARPIYHL (81 aa)). Residues 382–454 (SRQEREERDY…RARVPKPSTK (73 aa)) are disordered. Composition is skewed to basic and acidic residues over residues 383–395 (RQER…SRMP) and 414–425 (DQPKRPRIRDAD).

Belongs to the IWS1 family.

Its subcellular location is the nucleus. This chain is IWS1-like protein, found in Caenorhabditis elegans.